Reading from the N-terminus, the 244-residue chain is NAD(P)H-quinone oxidoreductase subunit K (244 aa).

4 residues coordinate [4Fe-4S] cluster: cysteine 60, cysteine 61, cysteine 125, and cysteine 156. Residues 213–244 (KSEKSIESSKLNPVEESSENIYETNSIDEVIK) are disordered. Residues 231–244 (ENIYETNSIDEVIK) are compositionally biased toward polar residues.

It belongs to the complex I 20 kDa subunit family. In terms of assembly, NDH-1 can be composed of about 15 different subunits; different subcomplexes with different compositions have been identified which probably have different functions. [4Fe-4S] cluster is required as a cofactor.

It localises to the cellular thylakoid membrane. The enzyme catalyses a plastoquinone + NADH + (n+1) H(+)(in) = a plastoquinol + NAD(+) + n H(+)(out). The catalysed reaction is a plastoquinone + NADPH + (n+1) H(+)(in) = a plastoquinol + NADP(+) + n H(+)(out). Its function is as follows. NDH-1 shuttles electrons from an unknown electron donor, via FMN and iron-sulfur (Fe-S) centers, to quinones in the respiratory and/or the photosynthetic chain. The immediate electron acceptor for the enzyme in this species is believed to be plastoquinone. Couples the redox reaction to proton translocation, and thus conserves the redox energy in a proton gradient. Cyanobacterial NDH-1 also plays a role in inorganic carbon-concentration. In Prochlorococcus marinus subsp. pastoris (strain CCMP1986 / NIES-2087 / MED4), this protein is NAD(P)H-quinone oxidoreductase subunit K.